The chain runs to 108 residues: Gibberellin-regulated protein 7 (108 aa).

An N-terminal signal peptide occupies residues 1-23 (MKIIVSILVLASLLLISSSLASA).

Belongs to the GASA family. In terms of processing, six disulfide bonds may be present.

Its subcellular location is the secreted. Functionally, gibberellin-regulated protein that may function in hormonal controlled steps of development such as seed germination, flowering and seed maturation. The protein is Gibberellin-regulated protein 7 (GASA7) of Arabidopsis thaliana (Mouse-ear cress).